The sequence spans 79 residues: RNA-binding protein Hfq (79 aa).

The 61-residue stretch at 10–70 folds into the Sm domain; the sequence is DVFLNTVRKQ…ISTIMPGQPV (61 aa).

It belongs to the Hfq family. Homohexamer.

RNA chaperone that binds small regulatory RNA (sRNAs) and mRNAs to facilitate mRNA translational regulation in response to envelope stress, environmental stress and changes in metabolite concentrations. Also binds with high specificity to tRNAs. The polypeptide is RNA-binding protein Hfq (Bartonella henselae (strain ATCC 49882 / DSM 28221 / CCUG 30454 / Houston 1) (Rochalimaea henselae)).